Here is a 461-residue protein sequence, read N- to C-terminus: D-phenylhydantoinase (461 aa).

Residues His59, His61, and Lys151 each contribute to the a divalent metal cation site. Lys151 carries the post-translational modification N6-carboxylysine. Position 156 (Tyr156) interacts with substrate. Residues His182 and His239 each coordinate a divalent metal cation. Ser286 provides a ligand contact to substrate. Position 313 (Asp313) interacts with a divalent metal cation. Asn335 lines the substrate pocket.

Belongs to the metallo-dependent hydrolases superfamily. Hydantoinase/dihydropyrimidinase family. As to quaternary structure, homotetramer. A divalent metal cation is required as a cofactor. Carboxylation allows a single lysine to coordinate two divalent metal cations.

The catalysed reaction is D-5-phenylhydantoin + H2O = N-carbamoyl-D-phenylglycine + H(+). Its function is as follows. Catalyzes the stereospecific hydrolysis of the cyclic amide bond of D-hydantoin derivatives with an aromatic side chains at the 5'-position. Has no activity on dihydropyrimidines. The physiological function is unknown. The protein is D-phenylhydantoinase of Escherichia coli O81 (strain ED1a).